The sequence spans 196 residues: Peptide deformylase (196 aa).

Fe cation contacts are provided by Cys-105 and His-147. Residue Glu-148 is part of the active site. His-151 is a Fe cation binding site.

The protein belongs to the polypeptide deformylase family. The cofactor is Fe(2+).

The catalysed reaction is N-terminal N-formyl-L-methionyl-[peptide] + H2O = N-terminal L-methionyl-[peptide] + formate. Its function is as follows. Removes the formyl group from the N-terminal Met of newly synthesized proteins. Requires at least a dipeptide for an efficient rate of reaction. N-terminal L-methionine is a prerequisite for activity but the enzyme has broad specificity at other positions. The polypeptide is Peptide deformylase (Flavobacterium johnsoniae (strain ATCC 17061 / DSM 2064 / JCM 8514 / BCRC 14874 / CCUG 350202 / NBRC 14942 / NCIMB 11054 / UW101) (Cytophaga johnsonae)).